Consider the following 502-residue polypeptide: Maturase K (502 aa).

The protein belongs to the intron maturase 2 family. MatK subfamily.

The protein localises to the plastid. The protein resides in the chloroplast. Its function is as follows. Usually encoded in the trnK tRNA gene intron. Probably assists in splicing its own and other chloroplast group II introns. This Vitis vinifera (Grape) protein is Maturase K.